The following is a 57-amino-acid chain: MLLVVIFGLVALFALWGVLRSVRNKNILGFLLAGATLFVFGWFTVMTVINSGYPTAH.

The next 2 membrane-spanning stretches (helical) occupy residues 2–22 (LLVVIFGLVALFALWGVLRSV) and 29–49 (GFLLAGATLFVFGWFTVMTVI).

Its subcellular location is the cell membrane. This is an uncharacterized protein from Bacillus subtilis (strain 168).